Here is a 149-residue protein sequence, read N- to C-terminus: uncharacterized protein (149 aa).

Residues 1–11 (MTKESKPDRLR) are compositionally biased toward basic and acidic residues. A disordered region spans residues 1–20 (MTKESKPDRLRQMGALNPKP).

This is an uncharacterized protein from Sinorhizobium fredii (strain NBRC 101917 / NGR234).